Reading from the N-terminus, the 282-residue chain is Tyrosine recombinase XerA (282 aa).

In terms of domain architecture, Core-binding (CB) spans 2–79; that stretch reads SEPNEVIEEF…ALRAYFRFEG (78 aa). The region spanning 95–271 is the Tyr recombinase domain; that stretch reads SLPKALTREE…TVEHLRKAQE (177 aa). Catalysis depends on residues arginine 132, lysine 157, histidine 223, arginine 226, and histidine 249. Residue tyrosine 258 is the O-(3'-phospho-DNA)-tyrosine intermediate of the active site.

Belongs to the 'phage' integrase family. XerA subfamily.

It is found in the cytoplasm. Site-specific tyrosine recombinase, which acts by catalyzing the cutting and rejoining of the recombining DNA molecules. The protein is Tyrosine recombinase XerA of Thermococcus kodakarensis (strain ATCC BAA-918 / JCM 12380 / KOD1) (Pyrococcus kodakaraensis (strain KOD1)).